Reading from the N-terminus, the 252-residue chain is Imidazole glycerol phosphate synthase subunit HisF (252 aa).

Residues D11 and D130 contribute to the active site.

Belongs to the HisA/HisF family. Heterodimer of HisH and HisF.

It is found in the cytoplasm. The enzyme catalyses 5-[(5-phospho-1-deoxy-D-ribulos-1-ylimino)methylamino]-1-(5-phospho-beta-D-ribosyl)imidazole-4-carboxamide + L-glutamine = D-erythro-1-(imidazol-4-yl)glycerol 3-phosphate + 5-amino-1-(5-phospho-beta-D-ribosyl)imidazole-4-carboxamide + L-glutamate + H(+). Its pathway is amino-acid biosynthesis; L-histidine biosynthesis; L-histidine from 5-phospho-alpha-D-ribose 1-diphosphate: step 5/9. Its function is as follows. IGPS catalyzes the conversion of PRFAR and glutamine to IGP, AICAR and glutamate. The HisF subunit catalyzes the cyclization activity that produces IGP and AICAR from PRFAR using the ammonia provided by the HisH subunit. This chain is Imidazole glycerol phosphate synthase subunit HisF, found in Staphylococcus epidermidis (strain ATCC 35984 / DSM 28319 / BCRC 17069 / CCUG 31568 / BM 3577 / RP62A).